Here is a 140-residue protein sequence, read N- to C-terminus: C-type lectin 6 (140 aa).

An N-terminal signal peptide occupies residues 1-23 (MGRLVFVSFGLLVVFLSLSGTGA). Intrachain disulfides connect Cys25–Cys36, Cys53–Cys138, and Cys115–Cys130. Residues 32–139 (YEGHCYRVFQ…CSKTHNVICK (108 aa)) enclose the C-type lectin domain.

Belongs to the snaclec family. As to quaternary structure, heteromultimer; disulfide-linked. As to expression, expressed by the venom gland.

The protein localises to the secreted. In terms of biological role, interferes with one step of hemostasis (modulation of platelet aggregation, or coagulation cascade, for example). The protein is C-type lectin 6 of Crotalus adamanteus (Eastern diamondback rattlesnake).